Here is a 738-residue protein sequence, read N- to C-terminus: 1,4-alpha-glucan branching enzyme GlgB (738 aa).

Catalysis depends on D399, which acts as the Nucleophile. The active-site Proton donor is E452.

This sequence belongs to the glycosyl hydrolase 13 family. GlgB subfamily. In terms of assembly, monomer.

It catalyses the reaction Transfers a segment of a (1-&gt;4)-alpha-D-glucan chain to a primary hydroxy group in a similar glucan chain.. It functions in the pathway glycan biosynthesis; glycogen biosynthesis. Its function is as follows. Catalyzes the formation of the alpha-1,6-glucosidic linkages in glycogen by scission of a 1,4-alpha-linked oligosaccharide from growing alpha-1,4-glucan chains and the subsequent attachment of the oligosaccharide to the alpha-1,6 position. In Chlamydia trachomatis serovar A (strain ATCC VR-571B / DSM 19440 / HAR-13), this protein is 1,4-alpha-glucan branching enzyme GlgB.